We begin with the raw amino-acid sequence, 347 residues long: Holliday junction branch migration complex subunit RuvB (347 aa).

The interval 1 to 185 is large ATPase domain (RuvB-L); sequence MSDDPTTPEL…FGFTAHLEFY (185 aa). Residues L24, R25, G66, K69, T70, T71, 132-134, R175, Y185, and R222 each bind ATP; that span reads EDF. Position 70 (T70) interacts with Mg(2+). A small ATPAse domain (RuvB-S) region spans residues 186-255; sequence DEGELAQVLA…AVHAALELYD (70 aa). A head domain (RuvB-H) region spans residues 258-347; sequence ELGLDRLDRA…SQPPSLMDDL (90 aa). The DNA site is built by R313 and R318.

The protein belongs to the RuvB family. In terms of assembly, homohexamer. Forms an RuvA(8)-RuvB(12)-Holliday junction (HJ) complex. HJ DNA is sandwiched between 2 RuvA tetramers; dsDNA enters through RuvA and exits via RuvB. An RuvB hexamer assembles on each DNA strand where it exits the tetramer. Each RuvB hexamer is contacted by two RuvA subunits (via domain III) on 2 adjacent RuvB subunits; this complex drives branch migration. In the full resolvosome a probable DNA-RuvA(4)-RuvB(12)-RuvC(2) complex forms which resolves the HJ.

It localises to the cytoplasm. It catalyses the reaction ATP + H2O = ADP + phosphate + H(+). Functionally, the RuvA-RuvB-RuvC complex processes Holliday junction (HJ) DNA during genetic recombination and DNA repair, while the RuvA-RuvB complex plays an important role in the rescue of blocked DNA replication forks via replication fork reversal (RFR). RuvA specifically binds to HJ cruciform DNA, conferring on it an open structure. The RuvB hexamer acts as an ATP-dependent pump, pulling dsDNA into and through the RuvAB complex. RuvB forms 2 homohexamers on either side of HJ DNA bound by 1 or 2 RuvA tetramers; 4 subunits per hexamer contact DNA at a time. Coordinated motions by a converter formed by DNA-disengaged RuvB subunits stimulates ATP hydrolysis and nucleotide exchange. Immobilization of the converter enables RuvB to convert the ATP-contained energy into a lever motion, pulling 2 nucleotides of DNA out of the RuvA tetramer per ATP hydrolyzed, thus driving DNA branch migration. The RuvB motors rotate together with the DNA substrate, which together with the progressing nucleotide cycle form the mechanistic basis for DNA recombination by continuous HJ branch migration. Branch migration allows RuvC to scan DNA until it finds its consensus sequence, where it cleaves and resolves cruciform DNA. This is Holliday junction branch migration complex subunit RuvB from Leifsonia xyli subsp. xyli (strain CTCB07).